We begin with the raw amino-acid sequence, 217 residues long: uncharacterized protein (217 aa).

Residues 98-203 enclose the PilZ domain; it reads QRRQYVRTDA…GDQQALLQYC (106 aa).

This is an uncharacterized protein from Bacillus subtilis (strain 168).